The sequence spans 124 residues: Fluoride-specific ion channel FluC (124 aa).

4 helical membrane-spanning segments follow: residues 5-25 (LLVS…AVWF), 32-52 (FAFG…ITLG), 61-81 (LLFV…SAEV), and 94-114 (LAVI…GILV). Residues G69 and T72 each contribute to the Na(+) site.

This sequence belongs to the fluoride channel Fluc/FEX (TC 1.A.43) family.

The protein resides in the cell inner membrane. The catalysed reaction is fluoride(in) = fluoride(out). With respect to regulation, na(+) is not transported, but it plays an essential structural role and its presence is essential for fluoride channel function. Fluoride-specific ion channel. Important for reducing fluoride concentration in the cell, thus reducing its toxicity. In Haemophilus ducreyi (strain 35000HP / ATCC 700724), this protein is Fluoride-specific ion channel FluC.